Reading from the N-terminus, the 750-residue chain is GRIP and coiled-coil domain-containing protein C27D7.02c (750 aa).

Disordered regions lie at residues 14–53 and 188–280; these read AQGQ…AKNM and KTVE…RDIA. Basic and acidic residues-rich tracts occupy residues 18–34 and 188–198; these read EEAK…DQLR and KTVETKNDVPE. Residues 28-182 adopt a coiled-coil conformation; sequence QEEDQLRRNN…AQSIEQEVIS (155 aa). The span at 201 to 213 shows a compositional bias: polar residues; that stretch reads RPSTDTIGVSSAL. Positions 213–243 form a coiled coil; sequence LSKKKKKRNRKNQKKKSTKQNIEATTENDAL. Residues 214–230 show a composition bias toward basic residues; the sequence is SKKKKKRNRKNQKKKST. Positions 233-251 are enriched in polar residues; sequence NIEATTENDALSESISTPD. A compositionally biased stretch (basic and acidic residues) spans 269–280; it reads ADSKEEERRDIA. Residues 344–665 are a coiled coil; it reads KLVEELTKQL…YEHLQKSFKN (322 aa). The interval 672–703 is disordered; sequence KQQPSNHGRNSSVSRSSSSVEVNSKHPGSDDM. Residues 676–693 are compositionally biased toward low complexity; it reads SNHGRNSSVSRSSSSVEV. A compositionally biased stretch (basic and acidic residues) spans 694 to 703; sequence NSKHPGSDDM. In terms of domain architecture, GRIP spans 700–748; it reads SDDMLIDKEYTRNILFQFLEQRDRRPEIVNLLSILLDLSEEQKQKLLSV.

It is found in the cytoplasm. This chain is GRIP and coiled-coil domain-containing protein C27D7.02c, found in Schizosaccharomyces pombe (strain 972 / ATCC 24843) (Fission yeast).